The chain runs to 495 residues: Cytochrome P450 94C1 (495 aa).

Residues 2 to 22 (LLIISFTIVSFFFIIIFSLFH) traverse the membrane as a helical segment. A heme-binding site is contributed by Cys-439.

The protein belongs to the cytochrome P450 family. Heme serves as cofactor.

Its subcellular location is the membrane. It is found in the endoplasmic reticulum membrane. It catalyses the reaction a 12-hydroxyjasmonyl-L-alpha-amino acid + 2 reduced [NADPH--hemoprotein reductase] + 2 O2 = a 12-hydroxy-12-oxojasmonyl-L-alpha-amino acid + 2 oxidized [NADPH--hemoprotein reductase] + 3 H2O + 3 H(+). In terms of biological role, involved in the oxidation of the plant hormone jasmonoyl-L-isoleucine (JA-Ile), a bioactive phytohormone of the jasmonate-mediated signaling pathway. Converts 12-hydroxy-JA-Ile (12OH-JA-Ile) to the carboxy-derivative 12COOH-JA-Ile. Exerts negative feedback control on JA-Ile levels and plays a role in attenuation of jasmonate responses. Also functions as in-chain fatty acids hydroxylase in vitro. Catalyzes the hydroxylation of 12-hydroxy-jasmonoyl-L-phenylalanine (12OH-JA-Phe) in vitro. Converts 12OH-JA-Phe to the carboxy-derivative 12COOH-JA-Phe. The protein is Cytochrome P450 94C1 of Arabidopsis thaliana (Mouse-ear cress).